The primary structure comprises 196 residues: DNA replication complex GINS protein PSF1 (196 aa).

Belongs to the GINS1/PSF1 family. As to quaternary structure, component of the GINS complex which is a heterotetramer of GINS1, GINS2, GINS3 and GINS4. Forms a stable subcomplex with GINS4. GINS complex interacts with DNA primase in vitro. Component of the CMG helicase complex, a hexameric ring of related MCM2-7 subunits stabilized by CDC45 and the tetrameric GINS complex.

The protein resides in the nucleus. The protein localises to the chromosome. Functionally, required for correct functioning of the GINS complex, a complex that plays an essential role in the initiation of DNA replication, and progression of DNA replication forks. GINS complex is a core component of CDC45-MCM-GINS (CMG) helicase, the molecular machine that unwinds template DNA during replication, and around which the replisome is built. This is DNA replication complex GINS protein PSF1 (Gins1) from Mus musculus (Mouse).